Consider the following 274-residue polypeptide: Dermonecrotic toxin LspiSicTox-betaIII1 G (274 aa).

His5 is an active-site residue. Glu25 and Asp27 together coordinate Mg(2+). His41 (nucleophile) is an active-site residue. Intrachain disulfides connect Cys45-Cys51 and Cys47-Cys189. Asn66 carries an N-linked (GlcNAc...) asparagine glycan. Mg(2+) is bound at residue Asp85.

Belongs to the arthropod phospholipase D family. Class II subfamily. Mg(2+) is required as a cofactor. In terms of tissue distribution, expressed by the venom gland.

It localises to the secreted. The catalysed reaction is an N-(acyl)-sphingosylphosphocholine = an N-(acyl)-sphingosyl-1,3-cyclic phosphate + choline. It catalyses the reaction an N-(acyl)-sphingosylphosphoethanolamine = an N-(acyl)-sphingosyl-1,3-cyclic phosphate + ethanolamine. The enzyme catalyses a 1-acyl-sn-glycero-3-phosphocholine = a 1-acyl-sn-glycero-2,3-cyclic phosphate + choline. It carries out the reaction a 1-acyl-sn-glycero-3-phosphoethanolamine = a 1-acyl-sn-glycero-2,3-cyclic phosphate + ethanolamine. Functionally, dermonecrotic toxins cleave the phosphodiester linkage between the phosphate and headgroup of certain phospholipids (sphingolipid and lysolipid substrates), forming an alcohol (often choline) and a cyclic phosphate. This toxin acts on sphingomyelin (SM). It may also act on ceramide phosphoethanolamine (CPE), lysophosphatidylcholine (LPC) and lysophosphatidylethanolamine (LPE), but not on lysophosphatidylserine (LPS), and lysophosphatidylglycerol (LPG). It acts by transphosphatidylation, releasing exclusively cyclic phosphate products as second products. Induces dermonecrosis, hemolysis, increased vascular permeability, edema, inflammatory response, and platelet aggregation. This chain is Dermonecrotic toxin LspiSicTox-betaIII1 G, found in Loxosceles spinulosa (Recluse spider).